The following is a 639-amino-acid chain: tRNA uridine 5-carboxymethylaminomethyl modification enzyme MnmG (639 aa).

Residues 13 to 18 (GGGHAG), Val125, and Ser180 contribute to the FAD site. 273 to 287 (GPRYCPSIEDKVVRF) provides a ligand contact to NAD(+). FAD is bound at residue Gln370. Positions 620–639 (KRQGGNGPQSPRPDDGRARA) are disordered.

It belongs to the MnmG family. In terms of assembly, homodimer. Heterotetramer of two MnmE and two MnmG subunits. FAD is required as a cofactor.

The protein resides in the cytoplasm. NAD-binding protein involved in the addition of a carboxymethylaminomethyl (cmnm) group at the wobble position (U34) of certain tRNAs, forming tRNA-cmnm(5)s(2)U34. The chain is tRNA uridine 5-carboxymethylaminomethyl modification enzyme MnmG from Thioalkalivibrio sulfidiphilus (strain HL-EbGR7).